Consider the following 1294-residue polypeptide: MEKSGPSSTISEQQLQRQEGWINTKTDLAEQSLISSEKWLQLHGLKSNKLTLKQILSQIGFPHCEDYVASLGRPVASRYADGLFPQLYRAEDGRVYNLTAKSELIYQFVEHLTQAVESYKQRMDWLTSKSRQIFGVILEQCVTIVLDFGGILEGELDLCREALTMVLQEQVAHITEFNIIRVSQEPVKWQENATPVTEQSIATAISWVEKLTVELTVSEAGRLDALLEAGRDKTIESIYYFVVGDVPEESKELLLQRALEIPCPVYTVSFNARGEGTIAFLKDLSAKTHSRFHAFAERTECVEFPAFSTKDGDNVMTWNSRKLKGKLPPGAGVREDVFLVWQEMEEACSTLAQIQRLVAEPPKPDVATVDCESETTSVEIASNPEDTWDSKTWLQKYGLKAQKLSLYDVLADCSFRHADGVVDIKAKPENESVQTSAETNKKTVHAKYCSRFVHAPWKDGSLVHVNITKEKCKWYSERIHTALARIRRRIKWLQDGSQSLFGRLHNDCIYILIDTSHSMKSKLDLVKDKIIQFIQEQLKYKSKFNFVKFDGQAVAWREQLAEVNEDNLEQAQSWIRDIKIGSSTNTLSALKTAFADKETQAIYLLTDGRPDQPPETVIDQVKRFQEIPIYTISFNYNDEIANRFLKEVAALTGGEFHFYNFGCKDPTPPEAVQNEDLTLLVKEMEQGHSDLEKMQDLYSESLIMDWWYNAEKDGDSKHQKEICSMISTPEKCAKPQSDVDSTQTSSLNMLKGPWGLSDQKVQKKKVLHAESTKTSLLRSQMSSLRSSACSERKDGLSNASSRRTALSDKEMSILLAEEWLDDKSSEKVTREGSQVYDHDSSDVSSENWLKTYGLVAKKLTLMDALSVAAVPHSSTYVPVLDKHVVSKVFDEVFPLAHVCNDTNKMTLINPQGAKLNIYKRKVEQAIQSYEKRLNKIVWRALSQEEKEKLDANKPIQYLENKTVLNQALERLNWPISLKELSMLESEILAGKMYIQQAMELQEAAKKNYANKAPGEQQKLQGNPTKKTKSKRPDPLKGQKVIARCDENGFYFPGVVKKCVSRTQALVGFSYGDTKVVSTSFITPVGGAMPCPLLQVGDYVFAKIVIPKGFDFYVPAIVIALPNKHVATEKFYTVLKCNNRREFCPRSALIKISQNKYALSCSHIKSPPIPEDPEVEDVEARNSAFLFWPLKEADTQDSREPRREKPRRKKRPAKQPLQQAAPSDSDGSSHGISSHGSCQGTHPEPRTAHLHFPAAGRLGLSSHAIIATPPPRAALPCTLQATHSSKGLRSVPETL.

One can recognise a VWFA domain in the interval 508–684 (CIYILIDTSH…EDLTLLVKEM (177 aa)). Disordered stretches follow at residues 732-754 (CAKP…KGPW), 778-803 (RSQM…SSRR), 1012-1036 (APGE…DPLK), and 1193-1247 (DTQD…PRTA). The segment covering 738 to 748 (DVDSTQTSSLN) has biased composition (polar residues). The span at 778 to 787 (RSQMSSLRSS) shows a compositional bias: low complexity. Basic and acidic residues predominate over residues 1193–1202 (DTQDSREPRR). Positions 1203 to 1212 (EKPRRKKRPA) are enriched in basic residues. Over residues 1213-1236 (KQPLQQAAPSDSDGSSHGISSHGS) the composition is skewed to low complexity.

It localises to the cytoplasm. In Homo sapiens (Human), this protein is von Willebrand factor A domain-containing protein 3B (VWA3B).